A 90-amino-acid polypeptide reads, in one-letter code: Protein S100-A6 (90 aa).

EF-hand domains are found at residues 12-47 (LVAI…IGSK) and 48-83 (LQDA…LALI). Ca(2+)-binding residues include T28 and E33. K40 carries the post-translational modification N6-acetyllysine. Residue S46 is modified to Phosphoserine. At K47 the chain carries N6-acetyllysine; alternate. N6-succinyllysine; alternate is present on K47. Positions 61, 63, 65, 67, and 72 each coordinate Ca(2+).

This sequence belongs to the S-100 family. As to quaternary structure, homodimer; head to tail assembly of 2 subunits. Interacts with CACYBP in a calcium-dependent manner. Interacts with ANXA2 and ANXA11 (via N-terminus). Interacts with SUGT1. Interacts with TP53; has higher affinity for TP53 that is phosphorylated on its N-terminal domain, and lower affinity for TP53 that is phosphorylated on its C-terminal domain. Interacts with tropomyosin. Interacts with FKBP4. Interacts with PPP5C (via TPR repeats); the interaction is calcium-dependent and modulates PPP5C activity. Interacts with TPPP; this interaction inhibits TPPP dimerization. In terms of processing, the N-terminus is blocked.

The protein resides in the nucleus envelope. It localises to the cytoplasm. It is found in the cell membrane. Its function is as follows. May function as calcium sensor and modulator, contributing to cellular calcium signaling. May function by interacting with other proteins, such as TPR-containing proteins, and indirectly play a role in many physiological processes such as the reorganization of the actin cytoskeleton and in cell motility. Binds 2 calcium ions. Calcium binding is cooperative. The chain is Protein S100-A6 (S100A6) from Homo sapiens (Human).